The following is a 231-amino-acid chain: Cytochrome c oxidase subunit 2 (231 aa).

At 1–30 (MNNFFQGYNLLFQHSLFASYMDWFHAFNCS) the chain is on the mitochondrial intermembrane side. The helical transmembrane segment at 31 to 51 (LLLGVLVFVTLLFGYLIFSTF) threads the bilayer. Topologically, residues 52–64 (YFKSKKIEYQFGE) are mitochondrial matrix. The helical transmembrane segment at 65–85 (LLCSIFPTIILLMQMVPSLSL) threads the bilayer. At 86 to 231 (LYYYGLMNLD…FKSWCFGTME (146 aa)) the chain is on the mitochondrial intermembrane side. Cu cation contacts are provided by His164, Cys199, Glu201, Cys203, His207, and Met210. Glu201 contributes to the Mg(2+) binding site.

The protein belongs to the cytochrome c oxidase subunit 2 family. As to quaternary structure, component of the cytochrome c oxidase (complex IV, CIV), a multisubunit enzyme composed of a catalytic core of 3 subunits and several supernumerary subunits. The complex exists as a monomer or a dimer and forms supercomplexes (SCs) in the inner mitochondrial membrane with ubiquinol-cytochrome c oxidoreductase (cytochrome b-c1 complex, complex III, CIII). Requires Cu cation as cofactor.

The protein localises to the mitochondrion inner membrane. The catalysed reaction is 4 Fe(II)-[cytochrome c] + O2 + 8 H(+)(in) = 4 Fe(III)-[cytochrome c] + 2 H2O + 4 H(+)(out). Functionally, component of the cytochrome c oxidase, the last enzyme in the mitochondrial electron transport chain which drives oxidative phosphorylation. The respiratory chain contains 3 multisubunit complexes succinate dehydrogenase (complex II, CII), ubiquinol-cytochrome c oxidoreductase (cytochrome b-c1 complex, complex III, CIII) and cytochrome c oxidase (complex IV, CIV), that cooperate to transfer electrons derived from NADH and succinate to molecular oxygen, creating an electrochemical gradient over the inner membrane that drives transmembrane transport and the ATP synthase. Cytochrome c oxidase is the component of the respiratory chain that catalyzes the reduction of oxygen to water. Electrons originating from reduced cytochrome c in the intermembrane space (IMS) are transferred via the dinuclear copper A center (CU(A)) of subunit 2 and heme A of subunit 1 to the active site in subunit 1, a binuclear center (BNC) formed by heme A3 and copper B (CU(B)). The BNC reduces molecular oxygen to 2 water molecules using 4 electrons from cytochrome c in the IMS and 4 protons from the mitochondrial matrix. This Caenorhabditis briggsae protein is Cytochrome c oxidase subunit 2 (cox-2).